Reading from the N-terminus, the 440-residue chain is GTPase Obg (440 aa).

The region spanning 5-163 (STFVDQTKIE…RTLRLELKVL (159 aa)) is the Obg domain. The 175-residue stretch at 164–338 (ADVGLVGFPS…LMSRAADLVS (175 aa)) folds into the OBG-type G domain. GTP contacts are provided by residues 170–177 (GFPSVGKS), 195–199 (FTTLK), 217–220 (DLPG), 288–291 (SQMD), and 319–321 (SSV). The Mg(2+) site is built by Ser177 and Thr197. Positions 362–440 (YHRPEKMEFT…IGDFSFEFVQ (79 aa)) constitute an OCT domain.

It belongs to the TRAFAC class OBG-HflX-like GTPase superfamily. OBG GTPase family. As to quaternary structure, monomer. The cofactor is Mg(2+).

It is found in the cytoplasm. Its function is as follows. An essential GTPase which binds GTP, GDP and possibly (p)ppGpp with moderate affinity, with high nucleotide exchange rates and a fairly low GTP hydrolysis rate. Plays a role in control of the cell cycle, stress response, ribosome biogenesis and in those bacteria that undergo differentiation, in morphogenesis control. This chain is GTPase Obg, found in Lactobacillus delbrueckii subsp. bulgaricus (strain ATCC BAA-365 / Lb-18).